The following is a 156-amino-acid chain: Large ribosomal subunit protein uL23 (156 aa).

Positions M1–A19 are enriched in basic and acidic residues. A disordered region spans residues M1 to R67. A2 is subject to N,N,N-trimethylalanine. K14 is covalently cross-linked (Glycyl lysine isopeptide (Lys-Gly) (interchain with G-Cter in SUMO2)). Residues K20–R67 are compositionally biased toward basic residues. A beta-like import receptor binding (BIB) domain region spans residues V32–Y74. R41 is modified (citrulline). S43 is subject to Phosphoserine. Phosphothreonine is present on T45. The residue at position 70 (K70) is an N6-acetyllysine.

This sequence belongs to the universal ribosomal protein uL23 family. Component of the large ribosomal subunit. Interacts with LYAR and GNL2. Interacts with MDM2; this interaction may promote MDM2-mediated p53/TP53 polyubiquitination. Directly interacts (via BIB domain) with IPO5, IPO7, KPNB1 and TNPO1; these interactions are involved in RPL23A nuclear import for the assembly of ribosomal subunits. Interacts with IPO8. In terms of processing, N-terminus is methylated by METTL11A/NTM1. Post-translationally, citrullinated by PADI4.

The protein resides in the cytoplasm. It localises to the nucleus. Component of the large ribosomal subunit. The ribosome is a large ribonucleoprotein complex responsible for the synthesis of proteins in the cell. Binds a specific region on the 26S rRNA. May promote p53/TP53 degradation possibly through the stimulation of MDM2-mediated TP53 polyubiquitination. This chain is Large ribosomal subunit protein uL23 (RPL23A), found in Oryctolagus cuniculus (Rabbit).